Reading from the N-terminus, the 122-residue chain is Large ribosomal subunit protein uL14 (122 aa).

It belongs to the universal ribosomal protein uL14 family. As to quaternary structure, part of the 50S ribosomal subunit. Forms a cluster with proteins L3 and L19. In the 70S ribosome, L14 and L19 interact and together make contacts with the 16S rRNA in bridges B5 and B8.

In terms of biological role, binds to 23S rRNA. Forms part of two intersubunit bridges in the 70S ribosome. This is Large ribosomal subunit protein uL14 from Paramagnetospirillum magneticum (strain ATCC 700264 / AMB-1) (Magnetospirillum magneticum).